Here is a 459-residue protein sequence, read N- to C-terminus: uncharacterized protein (459 aa).

In terms of domain architecture, TRAM spans 7-65; that stretch reads PVNKNEIYTLTFEDLTHEGNGVAKIEGYPLFVPEVLPDEQAKVKVVKVNKNFGFGKLLE. The [4Fe-4S] cluster site is built by C78, C82, C85, and C164. S-adenosyl-L-methionine contacts are provided by Q288, Y317, E338, and D386. C413 functions as the Nucleophile in the catalytic mechanism.

This sequence belongs to the class I-like SAM-binding methyltransferase superfamily. RNA M5U methyltransferase family.

This is an uncharacterized protein from Oceanobacillus iheyensis (strain DSM 14371 / CIP 107618 / JCM 11309 / KCTC 3954 / HTE831).